The sequence spans 234 residues: Zinc finger BED domain-containing protein 3 (234 aa).

The tract at residues alanine 19 to glycine 42 is disordered. Residues alanine 43–serine 104 form a BED-type zinc finger. The Zn(2+) site is built by cysteine 69, cysteine 72, histidine 92, and histidine 97. Disordered stretches follow at residues arginine 94–glutamate 126 and arginine 202–aspartate 225. Residues proline 111–alanine 122 are compositionally biased toward pro residues. A compositionally biased stretch (basic and acidic residues) spans leucine 216 to aspartate 225.

Associates with the subcortical maternal complex (SCMC) composed of at least NLRP5, KHDC3L, OOEP, and TLE6 via interaction with NLRP5 and TLE6. Interacts with AXIN1; the interaction is direct, enhanced by protein kinase GSK3B and casein kinase CSNK1E activities and decreases GSK3B-induced beta-catenin serine and threonine phosphorylations. In terms of tissue distribution, secreted in blood plasma, and expressed in skeletal muscle and adipose tissue (at protein level).

The protein resides in the cytoplasm. It localises to the membrane. Its subcellular location is the secreted. Its function is as follows. Acts as a positive regulator in the activation of the canonical Wnt/beta-catenin signaling pathway by stabilizing cytoplasmic beta-catenin. Involved in transcription activation of Wnt target gene expression. Plays a role in symmetric division of blastomeres in the early stages of embryogenesis via regulation of mitotic spindle central positioning and organization of the F-actin filament network. Plays a role in regulating the distribution of cellular organelles, via modulation of cytoskeletal dynamics and cytoplasmic lattice formation. The polypeptide is Zinc finger BED domain-containing protein 3 (ZBED3) (Homo sapiens (Human)).